We begin with the raw amino-acid sequence, 573 residues long: 2-isopropylmalate synthase (573 aa).

Residues 37–314 (PRWLSTDLRD…DPQIDFSNID (278 aa)) form the Pyruvate carboxyltransferase domain. Mg(2+) is bound by residues Asp46, His253, His255, and Asn289. Residues 456 to 573 (NPRNPWGRIQ…VVSAVNRAAR (118 aa)) form a regulatory domain region.

Belongs to the alpha-IPM synthase/homocitrate synthase family. LeuA type 2 subfamily. Homodimer. Mg(2+) is required as a cofactor.

The protein resides in the cytoplasm. The enzyme catalyses 3-methyl-2-oxobutanoate + acetyl-CoA + H2O = (2S)-2-isopropylmalate + CoA + H(+). It participates in amino-acid biosynthesis; L-leucine biosynthesis; L-leucine from 3-methyl-2-oxobutanoate: step 1/4. Functionally, catalyzes the condensation of the acetyl group of acetyl-CoA with 3-methyl-2-oxobutanoate (2-ketoisovalerate) to form 3-carboxy-3-hydroxy-4-methylpentanoate (2-isopropylmalate). The sequence is that of 2-isopropylmalate synthase from Streptomyces avermitilis (strain ATCC 31267 / DSM 46492 / JCM 5070 / NBRC 14893 / NCIMB 12804 / NRRL 8165 / MA-4680).